A 106-amino-acid chain; its full sequence is UPF0060 membrane protein Mrad2831_0929 (106 aa).

The next 4 helical transmembrane spans lie at 3 to 23, 30 to 50, 59 to 79, and 87 to 104; these read LLAY…FWAW, AWWT…LTLV, FAAY…LAEG, and LAGS…LLGR.

This sequence belongs to the UPF0060 family.

The protein resides in the cell inner membrane. The polypeptide is UPF0060 membrane protein Mrad2831_0929 (Methylobacterium radiotolerans (strain ATCC 27329 / DSM 1819 / JCM 2831 / NBRC 15690 / NCIMB 10815 / 0-1)).